The primary structure comprises 286 residues: KH domain-containing protein At2g38610 (286 aa).

An N-acetylserine modification is found at serine 2. Residues 141–208 (EIPVDNYPNF…EHLNEQLHIL (68 aa)) enclose the KH domain. A disordered region spans residues 256 to 286 (SNNLREESPGPSGGGSVSPFNSSGKRPKTGC). Phosphoserine is present on residues serine 263 and serine 273.

Its subcellular location is the nucleus. This is KH domain-containing protein At2g38610 from Arabidopsis thaliana (Mouse-ear cress).